The chain runs to 930 residues: Translation initiation factor IF-2 (930 aa).

The span at 50 to 67 (FKPAAAPKVEAKPAAPKV) shows a compositional bias: low complexity. Disordered stretches follow at residues 50-195 (FKPA…PRID) and 260-346 (EVVP…HELP). Basic and acidic residues-rich tracts occupy residues 68-90 (SAEKKTEKSEPAKPAVAKEEAKP) and 110-125 (FKAEREARAKEQAERR). Residues 129–141 (KGNNRDQQQNGNR) show a composition bias toward low complexity. Basic and acidic residues-rich tracts occupy residues 157 to 167 (RDNRRFNDQAK) and 262 to 295 (VPEKKEPAVDTRRKKQARPDKNRDDYDHEEDGPR). Residues 309–318 (NQKNSNWNNN) are compositionally biased toward low complexity. Over residues 337–346 (VTERKFHELP) the composition is skewed to basic and acidic residues. One can recognise a tr-type G domain in the interval 432-599 (ERPPVVTIMG…TVLLVAEIQE (168 aa)). The interval 441 to 448 (GHVDHGKT) is G1. 441-448 (GHVDHGKT) is a binding site for GTP. The segment at 466-470 (GITQH) is G2. Positions 487–490 (DTPG) are G3. Residues 487-491 (DTPGH) and 541-544 (NKID) contribute to the GTP site. The interval 541-544 (NKID) is G4. The G5 stretch occupies residues 577-579 (SAK).

It belongs to the TRAFAC class translation factor GTPase superfamily. Classic translation factor GTPase family. IF-2 subfamily.

The protein resides in the cytoplasm. In terms of biological role, one of the essential components for the initiation of protein synthesis. Protects formylmethionyl-tRNA from spontaneous hydrolysis and promotes its binding to the 30S ribosomal subunits. Also involved in the hydrolysis of GTP during the formation of the 70S ribosomal complex. This is Translation initiation factor IF-2 from Streptococcus pneumoniae (strain Hungary19A-6).